A 309-amino-acid polypeptide reads, in one-letter code: L-aminoadipate-semialdehyde dehydrogenase-phosphopantetheinyl transferase (309 aa).

CoA is bound by residues Arg47, 86–91 (RTAKGK), and 108–111 (NISH). Residues Asp129 and Glu181 each contribute to the Mg(2+) site. 181-185 (ESFIK) serves as a coordination point for CoA. At Ser258 the chain carries Phosphoserine.

Belongs to the P-Pant transferase superfamily. AcpS family. In terms of assembly, monomer. The cofactor is Mg(2+). Detected in heart, skeletal muscle, placenta, testis, brain, pancreas, liver and kidney.

The protein resides in the cytoplasm. It localises to the cytosol. The enzyme catalyses apo-[ACP] + CoA = holo-[ACP] + adenosine 3',5'-bisphosphate + H(+). The catalysed reaction is apo-[ACP] + acetyl-CoA = acetyl-[ACP] + adenosine 3',5'-bisphosphate + H(+). Functionally, catalyzes the post-translational modification of target proteins by phosphopantetheine. Can transfer the 4'-phosphopantetheine moiety from coenzyme A, regardless of whether the CoA is presented in the free thiol form or as an acetyl thioester, to a serine residue of a broad range of acceptors including the acyl carrier domain of FASN. This is L-aminoadipate-semialdehyde dehydrogenase-phosphopantetheinyl transferase (AASDHPPT) from Homo sapiens (Human).